A 589-amino-acid chain; its full sequence is Complement component C8 beta chain (589 aa).

A signal peptide spans 1–31; that stretch reads MKTGAQVWRALAKSCLLCAALGCLHLPGARG. Residues 32–53 constitute a propeptide that is removed on maturation; the sequence is EKPDFFETNAVNGSLVRSRPVR. An N-linked (GlcNAc...) asparagine glycan is attached at Asn43. Positions 63–116 constitute a TSP type-1 1 domain; it reads DCQLSTWSSWTACDPCQKKRYRHTYLLRPSQFYGELCDFSDKEVEDCVTNRACR. 7 cysteine pairs are disulfide-bonded: Cys64-Cys99, Cys75-Cys109, Cys78-Cys115, Cys121-Cys132, Cys126-Cys145, Cys139-Cys154, and Cys161-Cys199. C-linked (Man) tryptophan glycosylation is found at Trp69 and Trp72. Positions 120–155 constitute an LDL-receptor class A domain; sequence RCEGFVCAQTGRCVNRRLLCNGDNDCGDQSDEANCR. 6 residues coordinate Ca(2+): Leu137, Asn140, Asp142, Asp144, Asp150, and Glu151. The region spanning 157-503 is the MACPF domain; that stretch reads IYKKCSQDME…EFQMEVSSCR (347 aa). Asn242 carries an N-linked (GlcNAc...) asparagine glycan. 4 beta stranded membrane-spanning segments follow: residues 251–258, 261–268, 378–385, and 391–398; these read SSFKFGFK, GLVEFGVR, AGGGFQIG, and VYLKLGVS. Cys377 and Cys402 are joined by a disulfide. Thr417 is subject to Phosphothreonine. 4 cysteine pairs are disulfide-bonded: Cys502-Cys549, Cys504-Cys520, Cys507-Cys522, and Cys524-Cys533. The region spanning 504 to 534 is the EGF-like domain; that stretch reads CAPCRNNGVPILKESRCECICPAGFQGVACE. Positions 544-587 constitute a TSP type-1 2 domain; it reads DGKWSCWSDWSPCSGGRKTRQRQCNNPAPQRGGSPCSGPASETL. C-linked (Man) tryptophan glycosylation is found at Trp550 and Trp553. Cys556 and Cys589 are disulfide-bonded. A disordered region spans residues 556–589; sequence CSGGRKTRQRQCNNPAPQRGGSPCSGPASETLDC.

It belongs to the complement C6/C7/C8/C9 family. In terms of assembly, heterotrimer of 3 chains: alpha (C8A), beta (C8B) and gamma (C8G); the alpha and gamma chains are disulfide bonded. Component of the membrane attack complex (MAC), composed of complement C5b, C6, C7, C8A, C8B, C8G and multiple copies of the pore-forming subunit C9. Post-translationally, N-glycosylated; contains one or two bound glycans. Not O-glycosylated.

It localises to the secreted. The protein resides in the target cell membrane. Membrane attack complex (MAC) assembly is inhibited by CD59, thereby protecting self-cells from damage during complement activation. CD59 acts by binding to the beta-haipins of C8 (C8A and C8B), forming an intermolecular beta-sheet that prevents incorporation of the multiple copies of C9 required for complete formation of the osmolytic pore. MAC assembly is also inhibited by clusterin (CLU) chaperones that inhibit polymerization of C9. Component of the membrane attack complex (MAC), a multiprotein complex activated by the complement cascade, which inserts into a target cell membrane and forms a pore, leading to target cell membrane rupture and cell lysis. The MAC is initiated by proteolytic cleavage of C5 into complement C5b in response to the classical, alternative, lectin and GZMK complement pathways. The complement pathways consist in a cascade of proteins that leads to phagocytosis and breakdown of pathogens and signaling that strengthens the adaptive immune system. C8B, together with C8A and C8G, inserts into the target membrane, but does not form pores by itself. During MAC assembly, associates with C5b, C6 and C7 to form the C5b8 intermediate complex that inserts into the target membrane and traverses the bilayer increasing membrane rigidity. The sequence is that of Complement component C8 beta chain (C8b) from Rattus norvegicus (Rat).